The sequence spans 518 residues: T-box transcription factor TBX5 (518 aa).

Positions 1–46 (MADTDEGFGLARTPLEPDSKDRSCDSKPESALGAPSKSPSSPQAAF) are disordered. Residues 15–28 (LEPDSKDRSCDSKP) show a composition bias toward basic and acidic residues. The segment covering 34–45 (APSKSPSSPQAA) has biased composition (low complexity). Residues 58-238 (LHERELWLKF…NNPFAKGFRG (181 aa)) constitute a DNA-binding region (T-box). Disordered stretches follow at residues 254–307 (EYPV…LLPP) and 330–352 (ECSS…EEDT). The span at 269 to 301 (SNHSPFSSETRALSTSSNLGSQYQCENGVSGPS) shows a compositional bias: polar residues. Lys-339 is subject to N6-acetyllysine.

In terms of assembly, monomer. Homodimer (via the T-box); binds DNA as homodimer. Interacts (via the T-box) with NKX2-5 (via the homeobox); this complex binds DNA. Interacts with GATA4. Interacts with KAT2A and KAT2B. In terms of processing, acetylation at Lys-339 by KAT2A and KAT2B promotes nuclear retention.

It is found in the nucleus. It localises to the cytoplasm. Functionally, DNA-binding protein that regulates the transcription of several genes and is involved in heart development and limb pattern formation. Binds to the core DNA motif of NPPA promoter. This chain is T-box transcription factor TBX5 (Tbx5), found in Mus musculus (Mouse).